We begin with the raw amino-acid sequence, 639 residues long: UvrABC system protein C (639 aa).

One can recognise a GIY-YIG domain in the interval 20–97 (ERSGVYRMFD…IKKFQPKFNI (78 aa)). One can recognise a UVR domain in the interval 207-242 (KELQENLSRKMEELSSQMRFEEAAEIRDRIKALSYV).

It belongs to the UvrC family. As to quaternary structure, interacts with UvrB in an incision complex.

It localises to the cytoplasm. In terms of biological role, the UvrABC repair system catalyzes the recognition and processing of DNA lesions. UvrC both incises the 5' and 3' sides of the lesion. The N-terminal half is responsible for the 3' incision and the C-terminal half is responsible for the 5' incision. The protein is UvrABC system protein C of Rickettsia africae (strain ESF-5).